We begin with the raw amino-acid sequence, 314 residues long: MNAYLHCLSHTPLIGHFDPNQDVLDEVAEVVRAARARIEAFNPELVVLFAPDHYNGFFYDVMPPFCLGMEAEAIGDFGSLAGTLSVPKDVAEACAESVLTSGIDLAVSYRMQVDHGFAQPLDFLLGGLDKYPVLPVFVNCVAPPLPTFERVRLLGDAIGRFTRGLNKRVLFLGSGGLSHQPPVPELAKVDARMADRLMGSGRNLPPEERDARTQRVVVAAERFVENQNTLHPLNPKWDRYFLDVVEQDLLSQLDDLSNAHLSELAGKSTHEVKAWVAAFSALSAHGAYTATDRYYRPIPEWIAGFGSISAHTQR.

Residue histidine 115 is the Proton donor of the active site. Histidine 179 functions as the Proton acceptor in the catalytic mechanism.

Belongs to the LigB/MhpB extradiol dioxygenase family. Homotetramer. Fe(2+) serves as cofactor.

The enzyme catalyses 3-(2,3-dihydroxyphenyl)propanoate + O2 = (2Z,4E)-2-hydroxy-6-oxonona-2,4-dienedioate + H(+). The catalysed reaction is (2E)-3-(2,3-dihydroxyphenyl)prop-2-enoate + O2 = (2Z,4E,7E)-2-hydroxy-6-oxonona-2,4,7-trienedioate + H(+). Its pathway is aromatic compound metabolism; 3-phenylpropanoate degradation. In terms of biological role, catalyzes the non-heme iron(II)-dependent oxidative cleavage of 2,3-dihydroxyphenylpropionic acid and 2,3-dihydroxicinnamic acid into 2-hydroxy-6-ketononadienedioate and 2-hydroxy-6-ketononatrienedioate, respectively. The protein is 2,3-dihydroxyphenylpropionate/2,3-dihydroxicinnamic acid 1,2-dioxygenase 2 (mhpB2) of Pseudomonas putida (Arthrobacter siderocapsulatus).